The chain runs to 410 residues: Aspartate aminotransferase (410 aa).

L-aspartate contacts are provided by G47, W135, and N185. At K249 the chain carries N6-(pyridoxal phosphate)lysine. R385 lines the L-aspartate pocket.

It belongs to the class-I pyridoxal-phosphate-dependent aminotransferase family. Homodimer. Pyridoxal 5'-phosphate serves as cofactor.

It localises to the cytoplasm. The enzyme catalyses L-aspartate + 2-oxoglutarate = oxaloacetate + L-glutamate. It carries out the reaction L-2-aminoadipate + 2-oxoglutarate = 2-oxoadipate + L-glutamate. Functionally, catalyzes the reversible conversion of aspartate and 2-oxoglutarate to glutamate and oxaloacetate. Genetic evidence shows that this protein is involved in L-lysine catabolism. It may have 2-aminoadipate:2-oxoglutarate aminotransferase activity. The protein is Aspartate aminotransferase (aatB) of Rhizobium meliloti (strain 1021) (Ensifer meliloti).